Consider the following 482-residue polypeptide: G patch domain-containing protein 2-like (482 aa).

3 positions are modified to phosphoserine: Ser-31, Ser-86, and Ser-88. A Phosphothreonine modification is found at Thr-91. Lys-196 is covalently cross-linked (Glycyl lysine isopeptide (Lys-Gly) (interchain with G-Cter in SUMO2)). Positions 198–214 (GRKERMECETDEQKQGS) are enriched in basic and acidic residues. 2 disordered regions span residues 198 to 247 (GRKE…DDEQ) and 413 to 482 (KRKR…PGYS). Low complexity predominate over residues 220 to 230 (ECETSSVCSSS). Positions 439–450 (TPASQAPKSPSS) are enriched in polar residues. 2 positions are modified to phosphoserine: Ser-447 and Ser-449. The span at 456-469 (TSAAEKATDATTAT) shows a compositional bias: low complexity.

This chain is G patch domain-containing protein 2-like (GPATCH2L), found in Homo sapiens (Human).